A 345-amino-acid polypeptide reads, in one-letter code: Phosphoribosylformylglycinamidine cyclo-ligase (345 aa).

It belongs to the AIR synthase family.

The protein resides in the cytoplasm. It carries out the reaction 2-formamido-N(1)-(5-O-phospho-beta-D-ribosyl)acetamidine + ATP = 5-amino-1-(5-phospho-beta-D-ribosyl)imidazole + ADP + phosphate + H(+). The protein operates within purine metabolism; IMP biosynthesis via de novo pathway; 5-amino-1-(5-phospho-D-ribosyl)imidazole from N(2)-formyl-N(1)-(5-phospho-D-ribosyl)glycinamide: step 2/2. The protein is Phosphoribosylformylglycinamidine cyclo-ligase of Cronobacter sakazakii (strain ATCC BAA-894) (Enterobacter sakazakii).